The chain runs to 179 residues: Peptidyl-prolyl cis-trans isomerase H (179 aa).

Residues 16 to 178 (FFDISIGDTP…LQVRIAECGE (163 aa)) enclose the PPIase cyclophilin-type domain.

It belongs to the cyclophilin-type PPIase family. PPIase H subfamily.

Its subcellular location is the nucleus. It catalyses the reaction [protein]-peptidylproline (omega=180) = [protein]-peptidylproline (omega=0). PPIases accelerate the folding of proteins. It catalyzes the cis-trans isomerization of proline imidic peptide bonds in oligopeptides. The sequence is that of Peptidyl-prolyl cis-trans isomerase H (CYP3) from Cryptococcus neoformans var. neoformans serotype D (strain B-3501A) (Filobasidiella neoformans).